The primary structure comprises 164 residues: 6,7-dimethyl-8-ribityllumazine synthase (164 aa).

5-amino-6-(D-ribitylamino)uracil-binding positions include Phe24, 58-60 (ALE), and 82-84 (AVI). 87–88 (ET) provides a ligand contact to (2S)-2-hydroxy-3-oxobutyl phosphate. His90 serves as the catalytic Proton donor. Asn115 serves as a coordination point for 5-amino-6-(D-ribitylamino)uracil. (2S)-2-hydroxy-3-oxobutyl phosphate is bound at residue Arg129.

It belongs to the DMRL synthase family.

The enzyme catalyses (2S)-2-hydroxy-3-oxobutyl phosphate + 5-amino-6-(D-ribitylamino)uracil = 6,7-dimethyl-8-(1-D-ribityl)lumazine + phosphate + 2 H2O + H(+). It participates in cofactor biosynthesis; riboflavin biosynthesis; riboflavin from 2-hydroxy-3-oxobutyl phosphate and 5-amino-6-(D-ribitylamino)uracil: step 1/2. Functionally, catalyzes the formation of 6,7-dimethyl-8-ribityllumazine by condensation of 5-amino-6-(D-ribitylamino)uracil with 3,4-dihydroxy-2-butanone 4-phosphate. This is the penultimate step in the biosynthesis of riboflavin. The polypeptide is 6,7-dimethyl-8-ribityllumazine synthase (Ralstonia nicotianae (strain ATCC BAA-1114 / GMI1000) (Ralstonia solanacearum)).